The chain runs to 62 residues: Ubiquinol-cytochrome c reductase complex 6.7 kDa protein (62 aa).

Residues 2-25 (TSPAAAGNGLFKFLRPKLRPQSTD) lie on the Mitochondrial matrix side of the membrane. A helical membrane pass occupies residues 26–44 (IQAAAGWGVAAVTGALWVI). The Mitochondrial intermembrane segment spans residues 45 to 62 (QPWDFLRKTFIEKQEEEK).

It belongs to the UQCR11/QCR10 family. Component of the ubiquinol-cytochrome c oxidoreductase (cytochrome b-c1 complex, complex III, CIII), a multisubunit enzyme composed of 3 respiratory subunits cytochrome b, cytochrome c1 and Rieske protein, 2 core protein subunits, and additional low-molecular weight protein subunits. The complex exists as an obligatory dimer and forms supercomplexes (SCs) in the inner mitochondrial membrane with cytochrome c oxidase (complex IV, CIV).

Its subcellular location is the mitochondrion inner membrane. Functionally, component of the ubiquinol-cytochrome c oxidoreductase, a multisubunit transmembrane complex that is part of the mitochondrial electron transport chain which drives oxidative phosphorylation. The respiratory chain contains 3 multisubunit complexes succinate dehydrogenase (complex II, CII), ubiquinol-cytochrome c oxidoreductase (cytochrome b-c1 complex, complex III, CIII) and cytochrome c oxidase (complex IV, CIV), that cooperate to transfer electrons derived from NADH and succinate to molecular oxygen, creating an electrochemical gradient over the inner membrane that drives transmembrane transport and the ATP synthase. The cytochrome b-c1 complex catalyzes electron transfer from ubiquinol to cytochrome c, linking this redox reaction to translocation of protons across the mitochondrial inner membrane, with protons being carried across the membrane as hydrogens on the quinol. In the process called Q cycle, 2 protons are consumed from the matrix, 4 protons are released into the intermembrane space and 2 electrons are passed to cytochrome c. QCR10 has a role in CIII assembly and RIP1 stability. This is Ubiquinol-cytochrome c reductase complex 6.7 kDa protein from Solanum tuberosum (Potato).